Consider the following 320-residue polypeptide: Dual oxidase maturation factor 2 (320 aa).

Residues 22 to 42 form a helical membrane-spanning segment; the sequence is VPLLIVILVFLSLAASFLFIL. At 43–51 the chain is on the cytoplasmic side; the sequence is PGIRGHSRW. A helical transmembrane segment spans residues 52–72; sequence FWLVRVLLSLFIGAEIVAVHF. Topologically, residues 73-183 are extracellular; the sequence is SGDWFVGRVW…HLAGHYAAAT (111 aa). Asn-84, Asn-109, and Asn-121 each carry an N-linked (GlcNAc...) asparagine glycan. A helical transmembrane segment spans residues 184 to 204; the sequence is LWVAFCFWIIANALLSMPAPL. Residues 205-206 are Cytoplasmic-facing; the sequence is YG. Residues 207 to 227 form a helical membrane-spanning segment; the sequence is GLALLTTGAFTLFGVFAFASI. Over 228–249 the chain is Extracellular; it reads SSVPLCHFRLGSAVLTPYYGAS. Residues 250–270 form a helical membrane-spanning segment; that stretch reads FWLTLATGILSLLLGGAVVIL. The Cytoplasmic segment spans residues 271–320; the sequence is HYTRPSALRSFLDLSVKDCSNQAKGNSPLTLNNPQHEQLKSPDLNITTLL.

Belongs to the DUOXA family. In terms of assembly, heterodimer with DUXA2; disulfide-linked. Interacts with CSNK1G2. In terms of processing, N-glycosylated.

It is found in the endoplasmic reticulum membrane. Required for the maturation and the transport from the endoplasmic reticulum to the plasma membrane of functional DUOX2. May play a role in thyroid hormone synthesis. The chain is Dual oxidase maturation factor 2 (Duoxa2) from Mus musculus (Mouse).